The chain runs to 262 residues: Small ribosomal subunit protein eS1 (262 aa).

It belongs to the eukaryotic ribosomal protein eS1 family. As to quaternary structure, component of the small ribosomal subunit. Mature ribosomes consist of a small (40S) and a large (60S) subunit. The 40S subunit contains about 33 different proteins and 1 molecule of RNA (18S). The 60S subunit contains about 49 different proteins and 3 molecules of RNA (25S, 5.8S and 5S).

It is found in the cytoplasm. The polypeptide is Small ribosomal subunit protein eS1 (Cryptosporidium hominis).